The sequence spans 507 residues: Glycerol kinase (507 aa).

Thr15 is an ADP binding site. ATP contacts are provided by Thr15, Thr16, and Ser17. Thr15 serves as a coordination point for sn-glycerol 3-phosphate. ADP is bound at residue Arg19. Residues Arg85, Glu86, Tyr137, and Asp250 each coordinate sn-glycerol 3-phosphate. Glycerol is bound by residues Arg85, Glu86, Tyr137, Asp250, and Gln251. Residues Thr272 and Gly316 each contribute to the ADP site. The ATP site is built by Thr272, Gly316, Gln320, and Gly417. Position 417 (Gly417) interacts with ADP.

The protein belongs to the FGGY kinase family.

The enzyme catalyses glycerol + ATP = sn-glycerol 3-phosphate + ADP + H(+). It participates in polyol metabolism; glycerol degradation via glycerol kinase pathway; sn-glycerol 3-phosphate from glycerol: step 1/1. Inhibited by fructose 1,6-bisphosphate (FBP). Its function is as follows. Key enzyme in the regulation of glycerol uptake and metabolism. Catalyzes the phosphorylation of glycerol to yield sn-glycerol 3-phosphate. This is Glycerol kinase from Mycoplasmopsis pulmonis (strain UAB CTIP) (Mycoplasma pulmonis).